Consider the following 527-residue polypeptide: Probable pectinesterase/pectinesterase inhibitor 32 (527 aa).

Positions 1 to 24 (MAKFRQMGSSIFFLFLIIISLCSA) are cleaved as a signal peptide. The segment at 25-165 (HKEAFSSTDL…GTTVRNLLTM (141 aa)) is pectinesterase inhibitor 32. Residues Asn-110, Asn-209, Asn-224, and Asn-280 are each glycosylated (N-linked (GlcNAc...) asparagine). Residues 214–511 (DAVVAADGTG…FTVSQLIQGN (298 aa)) form a pectinesterase 32 region. Positions 289 and 319 each coordinate substrate. Asp-342 acts as the Proton donor; for pectinesterase activity in catalysis. A disulfide bond links Cys-356 and Cys-376. Asp-363 acts as the Nucleophile; for pectinesterase activity in catalysis. An N-linked (GlcNAc...) asparagine glycan is attached at Asn-423. Positions 431 and 433 each coordinate substrate. N-linked (GlcNAc...) asparagine glycosylation is found at Asn-494 and Asn-501.

It in the N-terminal section; belongs to the PMEI family. In the C-terminal section; belongs to the pectinesterase family. Expressed in siliques.

The protein resides in the secreted. Its subcellular location is the cell wall. The enzyme catalyses [(1-&gt;4)-alpha-D-galacturonosyl methyl ester](n) + n H2O = [(1-&gt;4)-alpha-D-galacturonosyl](n) + n methanol + n H(+). The protein operates within glycan metabolism; pectin degradation; 2-dehydro-3-deoxy-D-gluconate from pectin: step 1/5. Functionally, acts in the modification of cell walls via demethylesterification of cell wall pectin. This chain is Probable pectinesterase/pectinesterase inhibitor 32 (PME32), found in Arabidopsis thaliana (Mouse-ear cress).